Reading from the N-terminus, the 478-residue chain is Puromycin-sensitive aminopeptidase-like protein (478 aa).

Substrate contacts are provided by residues Glu-180 and 316–320 (GAMEN). Residue His-352 coordinates Zn(2+). Glu-353 (proton acceptor) is an active-site residue. Zn(2+) is bound by residues His-356 and Glu-375.

The protein belongs to the peptidase M1 family. The cofactor is Zn(2+).

Aminopeptidase with broad substrate specificity to several peptides. This Homo sapiens (Human) protein is Puromycin-sensitive aminopeptidase-like protein (NPEPPSL1).